Here is a 100-residue protein sequence, read N- to C-terminus: NADH-quinone oxidoreductase subunit K 2 (100 aa).

Helical transmembrane passes span 4 to 24 (LWWS…GVLL), 28 to 48 (ILIV…NFIA), and 60 to 80 (IFAI…LGIL).

Belongs to the complex I subunit 4L family. NDH-1 is composed of 14 different subunits. Subunits NuoA, H, J, K, L, M, N constitute the membrane sector of the complex.

It localises to the cell inner membrane. The catalysed reaction is a quinone + NADH + 5 H(+)(in) = a quinol + NAD(+) + 4 H(+)(out). NDH-1 shuttles electrons from NADH, via FMN and iron-sulfur (Fe-S) centers, to quinones in the respiratory chain. The immediate electron acceptor for the enzyme in this species is believed to be ubiquinone. Couples the redox reaction to proton translocation (for every two electrons transferred, four hydrogen ions are translocated across the cytoplasmic membrane), and thus conserves the redox energy in a proton gradient. In Rhizobium meliloti (strain 1021) (Ensifer meliloti), this protein is NADH-quinone oxidoreductase subunit K 2.